The following is a 339-amino-acid chain: Glucokinase (339 aa).

16-21 (GDIGGT) contacts ATP.

It belongs to the bacterial glucokinase family.

It localises to the cytoplasm. The enzyme catalyses D-glucose + ATP = D-glucose 6-phosphate + ADP + H(+). The chain is Glucokinase from Sinorhizobium medicae (strain WSM419) (Ensifer medicae).